Consider the following 360-residue polypeptide: Phospho-N-acetylmuramoyl-pentapeptide-transferase (360 aa).

10 consecutive transmembrane segments (helical) span residues tyrosine 21–glycine 41, threonine 73–leucine 93, threonine 94–valine 114, tryptophan 132–glycine 152, valine 168–serine 188, glycine 199–threonine 219, leucine 239–tyrosine 259, valine 263–leucine 283, phenylalanine 288–valine 308, and valine 338–lysine 358.

Belongs to the glycosyltransferase 4 family. MraY subfamily. It depends on Mg(2+) as a cofactor.

The protein resides in the cell inner membrane. The enzyme catalyses UDP-N-acetyl-alpha-D-muramoyl-L-alanyl-gamma-D-glutamyl-meso-2,6-diaminopimeloyl-D-alanyl-D-alanine + di-trans,octa-cis-undecaprenyl phosphate = di-trans,octa-cis-undecaprenyl diphospho-N-acetyl-alpha-D-muramoyl-L-alanyl-D-glutamyl-meso-2,6-diaminopimeloyl-D-alanyl-D-alanine + UMP. The protein operates within cell wall biogenesis; peptidoglycan biosynthesis. In terms of biological role, catalyzes the initial step of the lipid cycle reactions in the biosynthesis of the cell wall peptidoglycan: transfers peptidoglycan precursor phospho-MurNAc-pentapeptide from UDP-MurNAc-pentapeptide onto the lipid carrier undecaprenyl phosphate, yielding undecaprenyl-pyrophosphoryl-MurNAc-pentapeptide, known as lipid I. This Vibrio cholerae serotype O1 (strain ATCC 39541 / Classical Ogawa 395 / O395) protein is Phospho-N-acetylmuramoyl-pentapeptide-transferase.